A 315-amino-acid polypeptide reads, in one-letter code: Outer membrane protease IcsP (315 aa).

Residues 1–20 (MKLKFFVLALCVPAIFTTHA) form the signal peptide. Residues D103, D105, D230, and H232 contribute to the active site.

The protein belongs to the peptidase A26 family.

It localises to the cell outer membrane. In terms of biological role, protease responsible for the cleavage of IcsA between 'Arg-758' and 'Arg-759', removing the entire alpha domain from IscA localized on the bacterial surface. This proteolytic activity contributes to the maintenance of a tight polar cap of IcsA, which is important to Shigella actin-based motility. In Shigella flexneri, this protein is Outer membrane protease IcsP (icsP).